Here is a 434-residue protein sequence, read N- to C-terminus: Glutamate-1-semialdehyde 2,1-aminomutase (434 aa).

Position 265 is an N6-(pyridoxal phosphate)lysine (lysine 265).

It belongs to the class-III pyridoxal-phosphate-dependent aminotransferase family. HemL subfamily. As to quaternary structure, homodimer. Requires pyridoxal 5'-phosphate as cofactor.

The protein localises to the cytoplasm. It carries out the reaction (S)-4-amino-5-oxopentanoate = 5-aminolevulinate. The protein operates within porphyrin-containing compound metabolism; protoporphyrin-IX biosynthesis; 5-aminolevulinate from L-glutamyl-tRNA(Glu): step 2/2. The protein is Glutamate-1-semialdehyde 2,1-aminomutase of Ruminiclostridium cellulolyticum (strain ATCC 35319 / DSM 5812 / JCM 6584 / H10) (Clostridium cellulolyticum).